The following is a 177-amino-acid chain: Large ribosomal subunit protein uL6 (177 aa).

The protein belongs to the universal ribosomal protein uL6 family. As to quaternary structure, part of the 50S ribosomal subunit.

In terms of biological role, this protein binds to the 23S rRNA, and is important in its secondary structure. It is located near the subunit interface in the base of the L7/L12 stalk, and near the tRNA binding site of the peptidyltransferase center. This is Large ribosomal subunit protein uL6 from Rhizorhabdus wittichii (strain DSM 6014 / CCUG 31198 / JCM 15750 / NBRC 105917 / EY 4224 / RW1) (Sphingomonas wittichii).